The following is a 141-amino-acid chain: Hemoglobin subunit alpha (141 aa).

Positions 1 to 141 (VLSPADKTNV…VSTVLTSKYR (141 aa)) constitute a Globin domain. The residue at position 3 (serine 3) is a Phosphoserine. Position 7 is an N6-succinyllysine (lysine 7). At threonine 8 the chain carries Phosphothreonine. Residue lysine 11 is modified to N6-succinyllysine. Position 16 is an N6-acetyllysine; alternate (lysine 16). N6-succinyllysine; alternate is present on lysine 16. The residue at position 35 (serine 35) is a Phosphoserine. Position 40 is an N6-succinyllysine (lysine 40). O2 is bound at residue histidine 58. Residue histidine 87 coordinates heme b. A Phosphoserine modification is found at serine 102. Threonine 108 is modified (phosphothreonine). Serine 124 and serine 131 each carry phosphoserine. Phosphothreonine is present on residues threonine 134 and threonine 137. The residue at position 138 (serine 138) is a Phosphoserine.

This sequence belongs to the globin family. In terms of assembly, heterotetramer of two alpha chains and two beta chains. Red blood cells.

Functionally, involved in oxygen transport from the lung to the various peripheral tissues. Its function is as follows. Hemopressin acts as an antagonist peptide of the cannabinoid receptor CNR1. Hemopressin-binding efficiently blocks cannabinoid receptor CNR1 and subsequent signaling. The chain is Hemoglobin subunit alpha (HBA) from Physeter macrocephalus (Sperm whale).